The sequence spans 219 residues: MKAINIALDGPAAAGKSTIAKRVASELSMIYVDTGAMYRALTYKYLKLNKTEDFAKLVDQTTLDLTYKADKGQCVILDNEDVTDFLRNNDVTQHVSYVASKEPVRSFAVKKQKELAAEKGIVMDGRDIGTVVLPDADLKVYMIASVEERAERRYKDNQLRGIESNFEDLKRDIEARDQYDMNREISPLRKADDAVTLDTTGKTIEEVTDEILAMVSQIK.

10–18 contributes to the ATP binding site; the sequence is GPAAAGKST.

Belongs to the cytidylate kinase family. Type 1 subfamily.

It localises to the cytoplasm. It catalyses the reaction CMP + ATP = CDP + ADP. The enzyme catalyses dCMP + ATP = dCDP + ADP. In Staphylococcus aureus (strain MRSA252), this protein is Cytidylate kinase.